Reading from the N-terminus, the 316-residue chain is Replication initiation protein (316 aa).

This sequence belongs to the initiator RepB protein family.

In Escherichia coli, this protein is Replication initiation protein (repA).